Consider the following 163-residue polypeptide: Phosphopantetheine adenylyltransferase (163 aa).

Residue S11 participates in substrate binding. ATP is bound by residues 11-12 and H19; that span reads SF. 3 residues coordinate substrate: K43, A76, and R90. Residues 91–93, E101, and 126–132 contribute to the ATP site; these read GLR and WQALSSS.

The protein belongs to the bacterial CoaD family. As to quaternary structure, homohexamer. The cofactor is Mg(2+).

Its subcellular location is the cytoplasm. The enzyme catalyses (R)-4'-phosphopantetheine + ATP + H(+) = 3'-dephospho-CoA + diphosphate. It participates in cofactor biosynthesis; coenzyme A biosynthesis; CoA from (R)-pantothenate: step 4/5. Reversibly transfers an adenylyl group from ATP to 4'-phosphopantetheine, yielding dephospho-CoA (dPCoA) and pyrophosphate. The chain is Phosphopantetheine adenylyltransferase from Streptococcus pyogenes serotype M6 (strain ATCC BAA-946 / MGAS10394).